The chain runs to 92 residues: Small ribosomal subunit protein uS19c (92 aa).

This sequence belongs to the universal ribosomal protein uS19 family.

The protein resides in the plastid. Its subcellular location is the chloroplast. Functionally, protein S19 forms a complex with S13 that binds strongly to the 16S ribosomal RNA. The chain is Small ribosomal subunit protein uS19c from Ceratophyllum demersum (Rigid hornwort).